A 408-amino-acid polypeptide reads, in one-letter code: uncharacterized protein (408 aa).

8 consecutive 4Fe-4S ferredoxin-type domains span residues isoleucine 42–asparagine 72, lysine 78–histidine 107, serine 122–glycine 151, glycine 151–glutamate 181, lysine 212–lysine 241, glycine 233–proline 265, isoleucine 273–glutamate 302, and lysine 304–proline 333. [4Fe-4S] cluster contacts are provided by cysteine 52, cysteine 55, cysteine 58, cysteine 62, cysteine 87, cysteine 90, cysteine 93, cysteine 97, cysteine 131, cysteine 134, cysteine 137, cysteine 141, cysteine 160, cysteine 163, cysteine 166, and cysteine 170. [4Fe-4S] cluster-binding residues include cysteine 282, cysteine 285, cysteine 288, and cysteine 292.

This is an uncharacterized protein from Methanocaldococcus jannaschii (strain ATCC 43067 / DSM 2661 / JAL-1 / JCM 10045 / NBRC 100440) (Methanococcus jannaschii).